Reading from the N-terminus, the 227-residue chain is KH domain-containing protein MJ0443 (227 aa).

KH domains lie at 14 to 77 and 106 to 163; these read KSIE…RDIV and DYAS…KEAV.

This is KH domain-containing protein MJ0443 from Methanocaldococcus jannaschii (strain ATCC 43067 / DSM 2661 / JAL-1 / JCM 10045 / NBRC 100440) (Methanococcus jannaschii).